Here is a 170-residue protein sequence, read N- to C-terminus: Crossover junction endodeoxyribonuclease RuvC (170 aa).

Active-site residues include Asp11, Glu71, and Asp143. Mg(2+)-binding residues include Asp11, Glu71, and Asp143.

It belongs to the RuvC family. Homodimer which binds Holliday junction (HJ) DNA. The HJ becomes 2-fold symmetrical on binding to RuvC with unstacked arms; it has a different conformation from HJ DNA in complex with RuvA. In the full resolvosome a probable DNA-RuvA(4)-RuvB(12)-RuvC(2) complex forms which resolves the HJ. Mg(2+) is required as a cofactor.

The protein localises to the cytoplasm. The enzyme catalyses Endonucleolytic cleavage at a junction such as a reciprocal single-stranded crossover between two homologous DNA duplexes (Holliday junction).. The RuvA-RuvB-RuvC complex processes Holliday junction (HJ) DNA during genetic recombination and DNA repair. Endonuclease that resolves HJ intermediates. Cleaves cruciform DNA by making single-stranded nicks across the HJ at symmetrical positions within the homologous arms, yielding a 5'-phosphate and a 3'-hydroxyl group; requires a central core of homology in the junction. The consensus cleavage sequence is 5'-(A/T)TT(C/G)-3'. Cleavage occurs on the 3'-side of the TT dinucleotide at the point of strand exchange. HJ branch migration catalyzed by RuvA-RuvB allows RuvC to scan DNA until it finds its consensus sequence, where it cleaves and resolves the cruciform DNA. The polypeptide is Crossover junction endodeoxyribonuclease RuvC (Sinorhizobium fredii (strain NBRC 101917 / NGR234)).